A 154-amino-acid chain; its full sequence is Interleukin-2 (154 aa).

The N-terminal stretch at 1-20 is a signal peptide; it reads MCKMQLLSCIALSLVLVANS. A glycan (O-linked (GalNAc...) threonine) is linked at Thr-23. Cysteines 78 and 126 form a disulfide.

The protein belongs to the IL-2 family.

The protein resides in the secreted. Cytokine produced by activated CD4-positive helper T-cells and to a lesser extend activated CD8-positive T-cells and natural killer (NK) cells that plays pivotal roles in the immune response and tolerance. Binds to a receptor complex composed of either the high-affinity trimeric IL-2R (IL2RA/CD25, IL2RB/CD122 and IL2RG/CD132) or the low-affinity dimeric IL-2R (IL2RB and IL2RG). Interaction with the receptor leads to oligomerization and conformation changes in the IL-2R subunits resulting in downstream signaling starting with phosphorylation of JAK1 and JAK3. In turn, JAK1 and JAK3 phosphorylate the receptor to form a docking site leading to the phosphorylation of several substrates including STAT5. This process leads to activation of several pathways including STAT, phosphoinositide-3-kinase/PI3K and mitogen-activated protein kinase/MAPK pathways. Functions as a T-cell growth factor and can increase NK-cell cytolytic activity as well. Promotes strong proliferation of activated B-cells and subsequently immunoglobulin production. Plays a pivotal role in regulating the adaptive immune system by controlling the survival and proliferation of regulatory T-cells, which are required for the maintenance of immune tolerance. Moreover, participates in the differentiation and homeostasis of effector T-cell subsets, including Th1, Th2, Th17 as well as memory CD8-positive T-cells. The polypeptide is Interleukin-2 (IL2) (Mirounga angustirostris (Northern elephant seal)).